A 547-amino-acid chain; its full sequence is Nitrosoguanidine resistance protein SNG1 (547 aa).

The interval 35–86 is disordered; that stretch reads NQRFAEGSGHSSDLAKSLEDYRPPDEKPSSLSSVGEGGANEEEKGGNDGGPL. A compositionally biased stretch (basic and acidic residues) spans 50-62; the sequence is KSLEDYRPPDEKP. Thr-91 carries the post-translational modification Phosphothreonine. 8 helical membrane-spanning segments follow: residues 109–129, 159–179, 318–338, 363–383, 394–414, 418–438, 457–477, and 488–508; these read FVLN…IYWG, ISAI…IYNA, ILMA…VLQL, LISW…SAIF, GGFV…GGAN, LSLV…TWII, YGYI…FLNL, and ILVA…KFAG. Over residues 526-536 the composition is skewed to low complexity; that stretch reads ATQRASRPAEA. Residues 526–547 form a disordered region; the sequence is ATQRASRPAEANTDKNNNPPGN.

The protein to yeast YJR015W.

The protein resides in the membrane. Functionally, may function as a N-methyl-N'nitro-N-nitrosoguanidine (MNNG) export permease. The polypeptide is Nitrosoguanidine resistance protein SNG1 (SNG1) (Saccharomyces cerevisiae (strain ATCC 204508 / S288c) (Baker's yeast)).